We begin with the raw amino-acid sequence, 631 residues long: Probable potassium transport system protein Kup 1 (631 aa).

A run of 12 helical transmembrane segments spans residues 17–37 (LALG…LYAL), 55–75 (LSLI…MIIF), 101–121 (PLFY…GMLT), 140–160 (LYPY…SLQA), 166–186 (IGYL…ILGI), 217–237 (FLLG…ADIG), 249–269 (FFIA…NLIV), 277–297 (PFFM…ATVA), 338–358 (IYVP…CLAF), 370–390 (IAVN…AVSI), 395–415 (TFNV…FLGA), and 420–440 (FITG…IMYS).

This sequence belongs to the HAK/KUP transporter (TC 2.A.72) family.

It is found in the cell inner membrane. The enzyme catalyses K(+)(in) + H(+)(in) = K(+)(out) + H(+)(out). Functionally, transport of potassium into the cell. Likely operates as a K(+):H(+) symporter. This is Probable potassium transport system protein Kup 1 from Legionella pneumophila (strain Corby).